We begin with the raw amino-acid sequence, 616 residues long: RNA-directed RNA polymerase (616 aa).

It catalyses the reaction RNA(n) + a ribonucleoside 5'-triphosphate = RNA(n+1) + diphosphate. In terms of biological role, RNA-dependent RNA polymerase which replicates the viral genome. This White clover cryptic virus 1 (isolate Boccardo/2004) (WCCV-1) protein is RNA-directed RNA polymerase.